Here is a 363-residue protein sequence, read N- to C-terminus: Ataxin-3 (363 aa).

One can recognise a Josephin domain in the interval 1–180 (MESIFHERQE…DCEADQLLQM (180 aa)). Cys14 functions as the Nucleophile in the catalytic mechanism. Catalysis depends on His119, which acts as the Proton acceptor. Asn134 is an active-site residue. Residues 192-209 (IGEETAQSRDQRLPRSDV) are compositionally biased toward basic and acidic residues. A disordered region spans residues 192 to 212 (IGEETAQSRDQRLPRSDVDQA). UIM domains are found at residues 227–246 (EDEENFQRALALSRQEIDME), 247–266 (DEEADLRRAIQLSMQGSRQS), and 337–356 (SEEDMLQAAMNMSLESARNH). Residues 260 to 290 (MQGSRQSEFSNSLPQNASQPPHTSQTDSLSS) are compositionally biased toward polar residues. The disordered stretch occupies residues 260 to 363 (MQGSRQSEFS…RNHLSTEEKK (104 aa)). Residues 353–363 (ARNHLSTEEKK) are compositionally biased toward basic and acidic residues.

As to expression, widely expressed.

It localises to the nucleus matrix. The protein resides in the nucleus. The protein localises to the lysosome membrane. The enzyme catalyses Thiol-dependent hydrolysis of ester, thioester, amide, peptide and isopeptide bonds formed by the C-terminal Gly of ubiquitin (a 76-residue protein attached to proteins as an intracellular targeting signal).. Deubiquitinating enzyme involved in protein homeostasis maintenance, transcription, cytoskeleton regulation, myogenesis and degradation of misfolded chaperone substrates. Binds long polyubiquitin chains and trims them, while it has weak or no activity against chains of 4 or less ubiquitins. Involved in degradation of misfolded chaperone substrates via its interaction with STUB1/CHIP: recruited to monoubiquitinated STUB1/CHIP, and restricts the length of ubiquitin chain attached to STUB1/CHIP substrates and preventing further chain extension. Interacts with key regulators of transcription and represses transcription: acts as a histone-binding protein that regulates transcription. Acts as a negative regulator of mTORC1 signaling in response to amino acid deprivation by mediating deubiquitination of RHEB, thereby promoting RHEB inactivation by the TSC-TBC complex. Regulates autophagy via the deubiquitination of 'Lys-402' of BECN1 leading to the stabilization of BECN1. The sequence is that of Ataxin-3 (ATXN3) from Gallus gallus (Chicken).